The chain runs to 291 residues: DNA repair protein RecO (291 aa).

Belongs to the RecO family.

Involved in DNA repair and RecF pathway recombination. The protein is DNA repair protein RecO of Cupriavidus pinatubonensis (strain JMP 134 / LMG 1197) (Cupriavidus necator (strain JMP 134)).